The primary structure comprises 472 residues: Chromosomal replication initiator protein DnaA (472 aa).

The segment at 1-80 (MDTKQIWFTT…YQVNVRVIIS (80 aa)) is domain I, interacts with DnaA modulators. Residues 80–130 (SSATPAPSEPVAVTPSEPSPTTEVAEPSFASFNQAAPMLNQLPLGDPNRSS) form a domain II region. The interval 131–347 (VLNPRYTFSS…GCLNRVIAYA (217 aa)) is domain III, AAA+ region. ATP contacts are provided by Gly-175, Gly-177, Lys-178, and Thr-179. The interval 348-472 (NLNRTPVTVE…RQRLYGENAR (125 aa)) is domain IV, binds dsDNA.

This sequence belongs to the DnaA family. In terms of assembly, oligomerizes as a right-handed, spiral filament on DNA at oriC.

It is found in the cytoplasm. Its function is as follows. Plays an essential role in the initiation and regulation of chromosomal replication. ATP-DnaA binds to the origin of replication (oriC) to initiate formation of the DNA replication initiation complex once per cell cycle. Binds the DnaA box (a 9 base pair repeat at the origin) and separates the double-stranded (ds)DNA. Forms a right-handed helical filament on oriC DNA; dsDNA binds to the exterior of the filament while single-stranded (ss)DNA is stabiized in the filament's interior. The ATP-DnaA-oriC complex binds and stabilizes one strand of the AT-rich DNA unwinding element (DUE), permitting loading of DNA polymerase. After initiation quickly degrades to an ADP-DnaA complex that is not apt for DNA replication. Binds acidic phospholipids. The chain is Chromosomal replication initiator protein DnaA from Herpetosiphon aurantiacus (strain ATCC 23779 / DSM 785 / 114-95).